We begin with the raw amino-acid sequence, 106 residues long: Iron-sulfur cluster assembly protein CyaY (106 aa).

It belongs to the frataxin family.

Involved in iron-sulfur (Fe-S) cluster assembly. May act as a regulator of Fe-S biogenesis. The protein is Iron-sulfur cluster assembly protein CyaY of Escherichia coli O9:H4 (strain HS).